Here is an 837-residue protein sequence, read N- to C-terminus: Protein kintoun (837 aa).

Disordered stretches follow at residues 100–119, 205–224, 230–249, and 363–515; these read APSS…GSHW, LPGV…LPDF, YPAA…LQPA, and AAAP…GPGT. Residues 233 to 242 show a composition bias toward pro residues; it reads APGPRAPSPP. Over residues 428–442 the composition is skewed to basic and acidic residues; sequence GEERVPKPGEQDLSR. A compositionally biased stretch (low complexity) spans 445–459; that stretch reads GSPPGSVEEPSPGGE. Phosphoserine is present on residues Ser461 and Ser467. Positions 484 to 498 are enriched in basic and acidic residues; sequence ESARGDSSVETREES. Ser640, Ser641, and Ser773 each carry phosphoserine.

The protein belongs to the PIH1 family. Kintoun subfamily. As to quaternary structure, interacts with CFAP300. Interacts with DNAAF4. Interacts with DNAAF6/PIH1D3. Interacts with DNAI2 and HSPA1A.

It is found in the cytoplasm. The protein localises to the dynein axonemal particle. In terms of biological role, required for cytoplasmic pre-assembly of axonemal dyneins, thereby playing a central role in motility in cilia and flagella. Involved in pre-assembly of dynein arm complexes in the cytoplasm before intraflagellar transport loads them for the ciliary compartment. This is Protein kintoun from Homo sapiens (Human).